The following is a 275-amino-acid chain: NADPH-dependent 7-cyano-7-deazaguanine reductase (275 aa).

A substrate-binding site is contributed by 81–83 (VES). 83 to 84 (SK) serves as a coordination point for NADPH. The active-site Thioimide intermediate is Cys182. The active-site Proton donor is the Asp189. 221–222 (HE) contacts substrate. 250-251 (RG) is a binding site for NADPH.

The protein belongs to the GTP cyclohydrolase I family. QueF type 2 subfamily. In terms of assembly, homodimer.

The protein resides in the cytoplasm. It carries out the reaction 7-aminomethyl-7-carbaguanine + 2 NADP(+) = 7-cyano-7-deazaguanine + 2 NADPH + 3 H(+). Its pathway is tRNA modification; tRNA-queuosine biosynthesis. Its function is as follows. Catalyzes the NADPH-dependent reduction of 7-cyano-7-deazaguanine (preQ0) to 7-aminomethyl-7-deazaguanine (preQ1). The chain is NADPH-dependent 7-cyano-7-deazaguanine reductase from Polaromonas sp. (strain JS666 / ATCC BAA-500).